A 201-amino-acid polypeptide reads, in one-letter code: CASP-like protein 2B2 (201 aa).

The Cytoplasmic segment spans residues 1–28; sequence MSYLGVGVSPGNVTGSSTKMKLIDRKVR. A helical transmembrane segment spans residues 29–49; sequence VTELILRSLVCAFALVAAILV. At 50–71 the chain is on the extracellular side; that stretch reads ATDVQVREIFTIQKKAKFTDMK. Residues 72–92 traverse the membrane as a helical segment; that stretch reads ALVFLVVINGIAAGYSLVQAV. The Cytoplasmic segment spans residues 93 to 108; the sequence is CCLVGLMKGSVLLSEP. Residues 109-129 form a helical membrane-spanning segment; that stretch reads LAWAIFFGDQAVAYLCVAGVA. The Extracellular segment spans residues 130–166; it reads AAAQSAAFAKLGQPELQWMKICDMYGKFCNQVGEGIA. The helical transmembrane segment at 167-187 threads the bilayer; that stretch reads SALFACIGMVLISCISAFGVF. Over 188 to 201 the chain is Cytoplasmic; it reads RLYGGSKPRQSSRW.

The protein belongs to the Casparian strip membrane proteins (CASP) family. Homodimer and heterodimers.

The protein localises to the cell membrane. The protein is CASP-like protein 2B2 of Arabidopsis lyrata subsp. lyrata (Lyre-leaved rock-cress).